Reading from the N-terminus, the 676-residue chain is MEKNLPDIFFFPNCVNVFSYKYSQDEFSNMSKTERDSFSLAVFPVIKHRWHNAHVVKHKGIYKVSTEARGKKVSPPSLGKPAHINLTAKQYIYSEHTISFECYSFLKCITNTEINSFDEYILRGLLEAGNSLQIFSNSVGKRTDTIGVLGNKYPFSKIPLASLTPKAQREIFSAWISHRPVVLTGGTGVGKTSQVPKLLLWFNYLFGGFSTLDKITDFHERPVILSLPRIALVRLHSNTILKSLGFKVLDGSPISLRYGSIPEELINKQPKKYGIVFSTHKLSLTKLFSYGTLIIDEVHEHDQIGDIIIAVARKHHTKIDSMFLMTATLEDDRERLKVFLPNPAFIHIPGDTLFKISEVFIHNKINPSSRMAYIEEEKRNLVTAIQMYTPPDGSSGIVFVASVAQCHEYKSYLEKRLPYDMYIIHGKVLDIDEILEKVYSSPNVSIIISTPYLESSVTIHNVTHIYDMGRVFVPAPFGGSQQFISKSMRDQRKGRVGRVNPGTYVYFYDLSYMKSIQRIDSEFLHNYILYANKFNLTLPEDLFIIPTNLDILWRTKEYIDSFDISTETWNKLLSNYYMKMIEYAKLYVLSPILAEELDNFERTGELTSIVREAILSLNLRIKILNFKHKDDDTYIHFCKILFGVYNGTNATIYYHRPLTGYINIISDTIFVPVDNN.

The 176-residue stretch at 172-347 folds into the Helicase ATP-binding domain; that stretch reads FSAWISHRPV…VFLPNPAFIH (176 aa). 185–192 lines the ATP pocket; the sequence is GGTGVGKT. The DEXH box signature appears at 296–299; that stretch reads DEVH. Residues 366-535 form the Helicase C-terminal domain; that stretch reads NPSSRMAYIE…NYILYANKFN (170 aa).

This sequence belongs to the DEAD box helicase family. DEAH subfamily. As to quaternary structure, monomer.

It is found in the virion. It carries out the reaction ATP + H2O = ADP + phosphate + H(+). NTP-dependent helicase that catalyzes unidirectional unwinding of 3'tailed duplex RNAs and plays an important role during transcription of early mRNAs, presumably by preventing R-loop formation behind the elongating RNA polymerase. Might also play a role in the export of newly synthesized mRNA chains out of the core into the cytoplasm. Required for replication and propagation of viral particles. The chain is RNA helicase NPH-II (OPG084) from Homo sapiens (Human).